A 115-amino-acid chain; its full sequence is ATP-dependent Clp protease adapter protein ClpS (115 aa).

This sequence belongs to the ClpS family. As to quaternary structure, binds to the N-terminal domain of the chaperone ClpA.

Functionally, involved in the modulation of the specificity of the ClpAP-mediated ATP-dependent protein degradation. The chain is ATP-dependent Clp protease adapter protein ClpS from Leptothrix cholodnii (strain ATCC 51168 / LMG 8142 / SP-6) (Leptothrix discophora (strain SP-6)).